Reading from the N-terminus, the 454-residue chain is UPF0210 protein Ppro_0613 (454 aa).

Belongs to the UPF0210 family. Homodimer.

This Pelobacter propionicus (strain DSM 2379 / NBRC 103807 / OttBd1) protein is UPF0210 protein Ppro_0613.